The sequence spans 240 residues: MASLRLATLAMMVLFGSCRAGATVFTLVNKCSYTVWPGTLSGSGSSVLGEGGFTLAPGQSVPLTASSRWSGRFWGRTDCSFDASGKGSCITGDCGNVLNCAQAGGTPPVSLAEFTLGDKDFYDVSLVDGYNVPLSIAAVGGTGDCRTAGCVSDLRTSCPAELSVTSNGQVIACKSACAAFSTPEYCCTGDHGSPQTCSPSKYSQVFKSACPTAYSYAYDDATSTFTCSNADYTITFCPSS.

A signal peptide spans 1 to 20; sequence MASLRLATLAMMVLFGSCRA. 8 disulfide bridges follow: cysteine 31–cysteine 237, cysteine 79–cysteine 89, cysteine 94–cysteine 100, cysteine 145–cysteine 227, cysteine 150–cysteine 210, cysteine 158–cysteine 173, cysteine 177–cysteine 186, and cysteine 187–cysteine 197.

It belongs to the thaumatin family. As to expression, strongly expressed in pollen grains. Also present at weak levels in seedling roots, in sapling stems and in developing male strobili.

May be involved in disease resistance. This Cryptomeria japonica (Japanese cedar) protein is Pathogenesis-related thaumatin-like protein 3.5.